The chain runs to 751 residues: Protein WEAK CHLOROPLAST MOVEMENT UNDER BLUE LIGHT-like 3 (751 aa).

Phosphoserine is present on serine 113. Coiled coils occupy residues 165 to 558 and 588 to 647; these read ERRK…ALQE and QALE…KARD. Basic and acidic residues-rich tracts occupy residues 455 to 467 and 625 to 689; these read RERQ…KQKE and NREM…RNKE. Disordered stretches follow at residues 455 to 479 and 625 to 751; these read RERQ…DKDA and NREM…HSHK. Over residues 704 to 723 the composition is skewed to low complexity; sequence GSSSNNTGGSTTTNNNNLTP.

It belongs to the WEB family.

This is Protein WEAK CHLOROPLAST MOVEMENT UNDER BLUE LIGHT-like 3 (WEL3) from Arabidopsis thaliana (Mouse-ear cress).